Reading from the N-terminus, the 1212-residue chain is uncharacterized protein (1212 aa).

The segment covering Met-1–Tyr-31 has biased composition (polar residues). Disordered regions lie at residues Met-1–Gln-70, Pro-119–Asn-169, Ser-211–Asn-231, Ile-248–Lys-374, Gln-655–Gln-681, Asn-935–Ala-957, and Gln-973–Gln-1125. 2 stretches are compositionally biased toward low complexity: residues Pro-48–Gln-70 and Pro-119–Asn-163. A compositionally biased stretch (low complexity) spans Asn-256–Asn-275. 2 stretches are compositionally biased toward polar residues: residues Lys-276–Ser-285 and Tyr-292–Pro-317. A compositionally biased stretch (low complexity) spans Ile-322 to Gln-340. Polar residues predominate over residues Thr-341–His-351. The span at Asn-352–Asn-373 shows a compositional bias: low complexity. Low complexity-rich tracts occupy residues Asn-998 to Asn-1022 and Gln-1037 to Gln-1125.

This is an uncharacterized protein from Dictyostelium discoideum (Social amoeba).